The chain runs to 70 residues: Cytochrome c oxidase subunit 8B, mitochondrial (70 aa).

Residues 1 to 24 constitute a mitochondrion transit peptide; that stretch reads MSRLAPPLRLLQAPLKCWAVPKAH. Topologically, residues 25–35 are mitochondrial matrix; sequence VSAKPARTPTS. A helical membrane pass occupies residues 36–59; that stretch reads PMEQAVGLSVMFVSFLVPSGWVLS. Over 60-70 the chain is Mitochondrial intermembrane; that stretch reads HLESYKKSSTT.

Belongs to the cytochrome c oxidase VIII family. In terms of assembly, component of the cytochrome c oxidase (complex IV, CIV), a multisubunit enzyme composed of 14 subunits. The complex is composed of a catalytic core of 3 subunits MT-CO1, MT-CO2 and MT-CO3, encoded in the mitochondrial DNA, and 11 supernumerary subunits COX4I, COX5A, COX5B, COX6A, COX6B, COX6C, COX7A, COX7B, COX7C, COX8 and NDUFA4, which are encoded in the nuclear genome. The complex exists as a monomer or a dimer and forms supercomplexes (SCs) in the inner mitochondrial membrane with NADH-ubiquinone oxidoreductase (complex I, CI) and ubiquinol-cytochrome c oxidoreductase (cytochrome b-c1 complex, complex III, CIII), resulting in different assemblies (supercomplex SCI(1)III(2)IV(1) and megacomplex MCI(2)III(2)IV(2)).

The protein localises to the mitochondrion inner membrane. The protein operates within energy metabolism; oxidative phosphorylation. Its function is as follows. Component of the cytochrome c oxidase, the last enzyme in the mitochondrial electron transport chain which drives oxidative phosphorylation. The respiratory chain contains 3 multisubunit complexes succinate dehydrogenase (complex II, CII), ubiquinol-cytochrome c oxidoreductase (cytochrome b-c1 complex, complex III, CIII) and cytochrome c oxidase (complex IV, CIV), that cooperate to transfer electrons derived from NADH and succinate to molecular oxygen, creating an electrochemical gradient over the inner membrane that drives transmembrane transport and the ATP synthase. Cytochrome c oxidase is the component of the respiratory chain that catalyzes the reduction of oxygen to water. Electrons originating from reduced cytochrome c in the intermembrane space (IMS) are transferred via the dinuclear copper A center (CU(A)) of subunit 2 and heme A of subunit 1 to the active site in subunit 1, a binuclear center (BNC) formed by heme A3 and copper B (CU(B)). The BNC reduces molecular oxygen to 2 water molecules using 4 electrons from cytochrome c in the IMS and 4 protons from the mitochondrial matrix. The sequence is that of Cytochrome c oxidase subunit 8B, mitochondrial (COX8B) from Carlito syrichta (Philippine tarsier).